The primary structure comprises 213 residues: Urease accessory protein UreE (213 aa).

The tract at residues 170-213 (EHHGRSHSHSHSHSHDHDHDHDHDHDHDHQHGPSCSHGHGHGHR) is disordered. The span at 182-200 (HSHDHDHDHDHDHDHDHQH) shows a compositional bias: basic and acidic residues.

It belongs to the UreE family.

It localises to the cytoplasm. Involved in urease metallocenter assembly. Binds nickel. Probably functions as a nickel donor during metallocenter assembly. This Burkholderia thailandensis (strain ATCC 700388 / DSM 13276 / CCUG 48851 / CIP 106301 / E264) protein is Urease accessory protein UreE.